A 212-amino-acid chain; its full sequence is Adenylate kinase (212 aa).

10–15 contacts ATP; sequence GAGKGT. The tract at residues 30 to 59 is NMP; sequence AIGDIFRTIIKTSTSEAELINNYVRQGELI. Residues arginine 36, 57–59, 85–88, and glutamine 92 contribute to the AMP site; these read ELI and GYPR. The interval 122-160 is LID; sequence GRYSCKNCGKIYNRYFLQPKTDNVCDVCGSSTFDYRKDD. Residue arginine 123 participates in ATP binding. Cysteine 126 and cysteine 129 together coordinate Zn(2+). 132–133 contributes to the ATP binding site; sequence IY. Residues cysteine 146 and cysteine 149 each contribute to the Zn(2+) site. 2 residues coordinate AMP: arginine 157 and arginine 168. Lysine 196 provides a ligand contact to ATP.

This sequence belongs to the adenylate kinase family. Monomer.

The protein localises to the cytoplasm. The enzyme catalyses AMP + ATP = 2 ADP. Its pathway is purine metabolism; AMP biosynthesis via salvage pathway; AMP from ADP: step 1/1. Its function is as follows. Catalyzes the reversible transfer of the terminal phosphate group between ATP and AMP. Plays an important role in cellular energy homeostasis and in adenine nucleotide metabolism. The polypeptide is Adenylate kinase (Rickettsia peacockii (strain Rustic)).